The sequence spans 162 residues: MPKEKARPGETLIARNKRAGFNYDLGDRFEAGIVLKGSEVKMLRAGKADLTDSFCTVLRGEVFLHGVSIAAMASAAFGHVPKGARKLLLHRREIERIDLSIAREGMTAVATRLYFKSGLAKVEIALARGKKSHDKRETIKEQDAEREMRAVVVHGQRGYGRA.

The protein belongs to the SmpB family.

Its subcellular location is the cytoplasm. In terms of biological role, required for rescue of stalled ribosomes mediated by trans-translation. Binds to transfer-messenger RNA (tmRNA), required for stable association of tmRNA with ribosomes. tmRNA and SmpB together mimic tRNA shape, replacing the anticodon stem-loop with SmpB. tmRNA is encoded by the ssrA gene; the 2 termini fold to resemble tRNA(Ala) and it encodes a 'tag peptide', a short internal open reading frame. During trans-translation Ala-aminoacylated tmRNA acts like a tRNA, entering the A-site of stalled ribosomes, displacing the stalled mRNA. The ribosome then switches to translate the ORF on the tmRNA; the nascent peptide is terminated with the 'tag peptide' encoded by the tmRNA and targeted for degradation. The ribosome is freed to recommence translation, which seems to be the essential function of trans-translation. The sequence is that of SsrA-binding protein from Sorangium cellulosum (strain So ce56) (Polyangium cellulosum (strain So ce56)).